The chain runs to 390 residues: Protein phosphatase 1B (390 aa).

Residues 1–14 (MGAFLDKPKTEKHN) show a composition bias toward basic and acidic residues. The interval 1–20 (MGAFLDKPKTEKHNAHGAGN) is disordered. Gly2 carries the N-myristoyl glycine lipid modification. A Glycyl lysine isopeptide (Lys-Gly) (interchain with G-Cter in ISG15) cross-link involves residue Lys12. Positions 23 to 295 (RYGLSSMQGW…DNMSIVLVCF (273 aa)) constitute a PPM-type phosphatase domain. Positions 60, 61, 243, and 286 each coordinate Mn(2+). The segment at 371 to 390 (NPNKDNDGGAGDLEDSLVAL) is disordered. Ser386 bears the Phosphoserine mark.

It belongs to the PP2C family. As to quaternary structure, monomer. Interacts with PAK6. Interacts with the phosphorylated form of IKBKB/IKKB. The cofactor is Mg(2+). Requires Mn(2+) as cofactor. Isgylation negatively regulates its activity. Post-translationally, N-myristoylation is essential for the recognition of its substrates for dephosphorylation.

It is found in the cytoplasm. The protein localises to the cytosol. Its subcellular location is the membrane. It catalyses the reaction O-phospho-L-seryl-[protein] + H2O = L-seryl-[protein] + phosphate. The catalysed reaction is O-phospho-L-threonyl-[protein] + H2O = L-threonyl-[protein] + phosphate. Functionally, enzyme with a broad specificity. Dephosphorylates PRKAA1 and PRKAA2. Inhibits TBK1-mediated antiviral signaling by dephosphorylating it at 'Ser-172'. Plays an important role in the termination of TNF-alpha-mediated NF-kappa-B activation through dephosphorylating and inactivating IKBKB/IKKB. This is Protein phosphatase 1B (Ppm1b) from Rattus norvegicus (Rat).